A 175-amino-acid polypeptide reads, in one-letter code: Transcriptional repressor NrdR (175 aa).

Residues 3–34 fold into a zinc finger; it reads CPICQDTNSRVLESRSAESGKSIRRRRECMNC. Positions 49-139 constitute an ATP-cone domain; the sequence is ITIIKRDGKK…VYRKFQGIRD (91 aa).

The protein belongs to the NrdR family. The cofactor is Zn(2+).

Negatively regulates transcription of bacterial ribonucleotide reductase nrd genes and operons by binding to NrdR-boxes. This is Transcriptional repressor NrdR from Trichodesmium erythraeum (strain IMS101).